Reading from the N-terminus, the 279-residue chain is Putative Delta(7)-sterol-C5(6)-desaturase 2 (279 aa).

Transmembrane regions (helical) follow at residues 48–68 (LAGNILYFISGFLWCFYIYYL) and 127–147 (FLCFLYIALYLVLVEFMIYWV). Residues 134-263 (ALYLVLVEFM…TIWMDWMFGS (130 aa)) enclose the Fatty acid hydroxylase domain. Positions 148-152 (HKELH) match the Histidine box-1 motif. The Histidine box-2 motif lies at 162 to 166 (HATHH). The chain crosses the membrane as a helical span at residues 194–214 (HVIALFIVPIHLITHLSLLFL). The Histidine box-3 signature appears at 239-243 (HTIHH).

This sequence belongs to the sterol desaturase family. Fe cation is required as a cofactor.

The protein resides in the endoplasmic reticulum membrane. The catalysed reaction is a Delta(7)-sterol + 2 Fe(II)-[cytochrome b5] + O2 + 2 H(+) = a Delta(5),Delta(7)-sterol + 2 Fe(III)-[cytochrome b5] + 2 H2O. The chain is Putative Delta(7)-sterol-C5(6)-desaturase 2 (HDF7) from Arabidopsis thaliana (Mouse-ear cress).